A 70-amino-acid chain; its full sequence is Small, acid-soluble spore protein I (70 aa).

This sequence belongs to the SspI family.

The protein localises to the spore core. This is Small, acid-soluble spore protein I from Bacillus licheniformis (strain ATCC 14580 / DSM 13 / JCM 2505 / CCUG 7422 / NBRC 12200 / NCIMB 9375 / NCTC 10341 / NRRL NRS-1264 / Gibson 46).